We begin with the raw amino-acid sequence, 427 residues long: Serine--tRNA ligase (427 aa).

233–235 (TAE) contacts L-serine. 264–266 (RSE) contributes to the ATP binding site. Residue Glu-287 participates in L-serine binding. 351-354 (EISS) contacts ATP. An L-serine-binding site is contributed by Ser-387.

It belongs to the class-II aminoacyl-tRNA synthetase family. Type-1 seryl-tRNA synthetase subfamily. As to quaternary structure, homodimer. The tRNA molecule binds across the dimer.

Its subcellular location is the cytoplasm. The catalysed reaction is tRNA(Ser) + L-serine + ATP = L-seryl-tRNA(Ser) + AMP + diphosphate + H(+). The enzyme catalyses tRNA(Sec) + L-serine + ATP = L-seryl-tRNA(Sec) + AMP + diphosphate + H(+). Its pathway is aminoacyl-tRNA biosynthesis; selenocysteinyl-tRNA(Sec) biosynthesis; L-seryl-tRNA(Sec) from L-serine and tRNA(Sec): step 1/1. In terms of biological role, catalyzes the attachment of serine to tRNA(Ser). Is also able to aminoacylate tRNA(Sec) with serine, to form the misacylated tRNA L-seryl-tRNA(Sec), which will be further converted into selenocysteinyl-tRNA(Sec). This is Serine--tRNA ligase from Buchnera aphidicola subsp. Schizaphis graminum (strain Sg).